The following is a 396-amino-acid chain: Tryptophan synthase beta chain 1 (396 aa).

Lysine 86 is modified (N6-(pyridoxal phosphate)lysine).

Belongs to the TrpB family. Tetramer of two alpha and two beta chains. Pyridoxal 5'-phosphate serves as cofactor.

It carries out the reaction (1S,2R)-1-C-(indol-3-yl)glycerol 3-phosphate + L-serine = D-glyceraldehyde 3-phosphate + L-tryptophan + H2O. Its pathway is amino-acid biosynthesis; L-tryptophan biosynthesis; L-tryptophan from chorismate: step 5/5. The beta subunit is responsible for the synthesis of L-tryptophan from indole and L-serine. This is Tryptophan synthase beta chain 1 (trpB1) from Vibrio parahaemolyticus serotype O3:K6 (strain RIMD 2210633).